A 257-amino-acid polypeptide reads, in one-letter code: Phosphate import ATP-binding protein PstB (257 aa).

One can recognise an ABC transporter domain in the interval 11-252; sequence IQVRDLNFYY…PAKKQTEDYI (242 aa). 43 to 50 is an ATP binding site; it reads GPSGSGKS.

This sequence belongs to the ABC transporter superfamily. Phosphate importer (TC 3.A.1.7) family. As to quaternary structure, the complex is composed of two ATP-binding proteins (PstB), two transmembrane proteins (PstC and PstA) and a solute-binding protein (PstS).

It localises to the cell inner membrane. It catalyses the reaction phosphate(out) + ATP + H2O = ADP + 2 phosphate(in) + H(+). Part of the ABC transporter complex PstSACB involved in phosphate import. Responsible for energy coupling to the transport system. The chain is Phosphate import ATP-binding protein PstB from Salmonella choleraesuis (strain SC-B67).